The following is a 407-amino-acid chain: S-adenosylmethionine synthase (407 aa).

An ATP-binding site is contributed by His15. Asp17 contacts Mg(2+). Residue Glu43 participates in K(+) binding. L-methionine is bound by residues Glu56 and Gln99. The segment at 99-109 (QSPDIARGVDT) is flexible loop. A disordered region spans residues 112–131 (ERRGGGTAPGGPGDELDRQG). ATP contacts are provided by residues 179-181 (DGK), 252-253 (RF), Asp261, 267-268 (RK), Ala284, and Lys288. Residue Asp261 participates in L-methionine binding. Residue Lys292 participates in L-methionine binding.

It belongs to the AdoMet synthase family. Homotetramer; dimer of dimers. Requires Mg(2+) as cofactor. It depends on K(+) as a cofactor.

It localises to the cytoplasm. The catalysed reaction is L-methionine + ATP + H2O = S-adenosyl-L-methionine + phosphate + diphosphate. The protein operates within amino-acid biosynthesis; S-adenosyl-L-methionine biosynthesis; S-adenosyl-L-methionine from L-methionine: step 1/1. Catalyzes the formation of S-adenosylmethionine (AdoMet) from methionine and ATP. The overall synthetic reaction is composed of two sequential steps, AdoMet formation and the subsequent tripolyphosphate hydrolysis which occurs prior to release of AdoMet from the enzyme. The polypeptide is S-adenosylmethionine synthase (Streptomyces fradiae (Streptomyces roseoflavus)).